A 295-amino-acid chain; its full sequence is MAAAGQAEECLPLPAAESSKTSLPTPPAVPAGKKPKKCLVYPHPPRSSRLSRSVLRWLQGLDLSFFPRNVTRDFSNGYLVAEIFCIYYPWDLRLSSFENGTSLKVKLDNWAQIEKFLAKKKFKLPKELIHGTIHCKAGVPEILIQEIYTLLTHQEIRSIQDDLANFTDYIYQMRLPLVPRNTVSKSIKNNIRLSELLSNPNVLSNELKIEFLILLQMLQRKLSRKLNPGWFDVKPTVGEITIDRLPAHSYKRRYKSRGSKEKAAQPLSKSDNDGNARKEIHVKQSGNPCENTENL.

Positions 1-34 (MAAAGQAEECLPLPAAESSKTSLPTPPAVPAGKK) are disordered. The 107-residue stretch at 48-154 (SRLSRSVLRW…QEIYTLLTHQ (107 aa)) folds into the Calponin-homology (CH) domain. A disordered region spans residues 251–295 (KRRYKSRGSKEKAAQPLSKSDNDGNARKEIHVKQSGNPCENTENL). The span at 270–282 (SDNDGNARKEIHV) shows a compositional bias: basic and acidic residues. Over residues 284-295 (QSGNPCENTENL) the composition is skewed to polar residues.

Testis.

It is found in the nucleus. Its function is as follows. May play a role in apoptosis regulation. The protein is Spermatogenesis-associated protein 4 (Spata4) of Mus musculus (Mouse).